We begin with the raw amino-acid sequence, 143 residues long: MKGIIVSDGVYREEDVFAGQRIFMTPELIEKTMLGLVQKYNQYRPTTKSSPYAVAAWLLHAFVSIHPFIDGNGRMGRILANLVLFSYGFPFPVPISADNDEYIKSLRLADRYYEKGRDTSHLALIILNSSHSIYKNYLSNLEL.

One can recognise a Fido domain in the interval 1–128 (MKGIIVSDGV…TSHLALIILN (128 aa)). The chain crosses the membrane as a helical span at residues 49–69 (SSPYAVAAWLLHAFVSIHPFI).

The protein resides in the membrane. The protein is Fido domain-containing protein DDB_G0283145 of Dictyostelium discoideum (Social amoeba).